Here is a 907-residue protein sequence, read N- to C-terminus: Protein translocase subunit SecA (907 aa).

ATP contacts are provided by residues Gln87, 105–109, and Asp512; that span reads GEGKT. The disordered stretch occupies residues 834–907; that stretch reads QSDVDDMEQR…KYKQCHGKLS (74 aa). The segment covering 840-856 has biased composition (basic and acidic residues); it reads MEQRRREEEAKIQRDYQ. The segment covering 865–876 has biased composition (polar residues); the sequence is DESQASSDNTPK. Residues 878–887 show a composition bias toward basic and acidic residues; it reads MIREGDKVGR. Zn(2+) contacts are provided by Cys891, Cys893, Cys902, and His903. A compositionally biased stretch (basic residues) spans 897-907; it reads KKYKQCHGKLS.

It belongs to the SecA family. Monomer and homodimer. Part of the essential Sec protein translocation apparatus which comprises SecA, SecYEG and auxiliary proteins SecDF-YajC and YidC. Zn(2+) is required as a cofactor.

It is found in the cell inner membrane. The protein resides in the cytoplasm. The enzyme catalyses ATP + H2O + cellular proteinSide 1 = ADP + phosphate + cellular proteinSide 2.. Part of the Sec protein translocase complex. Interacts with the SecYEG preprotein conducting channel. Has a central role in coupling the hydrolysis of ATP to the transfer of proteins into and across the cell membrane, serving both as a receptor for the preprotein-SecB complex and as an ATP-driven molecular motor driving the stepwise translocation of polypeptide chains across the membrane. The protein is Protein translocase subunit SecA of Shewanella denitrificans (strain OS217 / ATCC BAA-1090 / DSM 15013).